The sequence spans 391 residues: Mycofactocin maturase MftC (391 aa).

One can recognise a Radical SAM core domain in the interval 16–232 (LDAPICLTWE…KGERVLTGDS (217 aa)). [4Fe-4S] cluster contacts are provided by C30, C34, C37, C251, C258, C269, C310, C313, C319, C323, and C341. The disordered stretch occupies residues 340 to 391 (ECVQGHSEPALARERHLPRPRADHSRGRRVSKPVPLTLSMRPPKRPCNESPV). The span at 350–364 (LARERHLPRPRADHS) shows a compositional bias: basic and acidic residues.

This sequence belongs to the radical SAM superfamily. It depends on [4Fe-4S] cluster as a cofactor.

It catalyses the reaction [mycofactocin precursor peptide]-C-terminal glycyl-L-valyl-L-tyrosine + S-adenosyl-L-methionine = [mycofactocin precursor peptide]-C-terminal glycyl-N-{[2-(4-hydroxyphenyl)ethenyl]-3-methylbutanamide} + 5'-deoxyadenosine + L-methionine + CO2. The catalysed reaction is [mycofactocin precursor peptide]-C-terminal glycyl-N-{[2-(4-hydroxyphenyl)ethenyl]-3-methylbutanamide} + AH2 + S-adenosyl-L-methionine = [mycofactocin precursor peptide]-C-terminal glycyl-N-{5-[(4-hydroxyphenyl)methyl]-4,4-dimethyl-2-oxopyrrolidin-3-yl}acetamide + 5'-deoxyadenosine + L-methionine + A + H(+). Radical S-adenosylmethionine (SAM) enzyme responsible for the first step of the biosynthesis of the enzyme cofactor mycofactocin (MFT). Catalyzes two reactions at the C-terminus of the mycofactocin precursor (the MftA peptide). The first one is the oxidative decarboxylation of the C-terminal L-tyrosine of MftA, forming an unsaturated tyramine moiety. The second reaction is the cross-linking of the tyramine with the penultimate L-valine residue, forming a five-membered lactam ring. Its activity requires the presence of the MftB chaperone. In Mycobacterium tuberculosis (strain CDC 1551 / Oshkosh), this protein is Mycofactocin maturase MftC (mftC).